The chain runs to 218 residues: Phosphoglycolate phosphatase (218 aa).

Catalysis depends on Asp-7, which acts as the Nucleophile. Residues Asp-7, Asp-9, and Asp-167 each coordinate Mg(2+).

It belongs to the HAD-like hydrolase superfamily. CbbY/CbbZ/Gph/YieH family. Mg(2+) is required as a cofactor.

It catalyses the reaction 2-phosphoglycolate + H2O = glycolate + phosphate. Its pathway is organic acid metabolism; glycolate biosynthesis; glycolate from 2-phosphoglycolate: step 1/1. In terms of biological role, specifically catalyzes the dephosphorylation of 2-phosphoglycolate. Is involved in the dissimilation of the intracellular 2-phosphoglycolate formed during the DNA repair of 3'-phosphoglycolate ends, a major class of DNA lesions induced by oxidative stress. In Cereibacter sphaeroides (strain ATCC 17025 / ATH 2.4.3) (Rhodobacter sphaeroides), this protein is Phosphoglycolate phosphatase.